A 2912-amino-acid chain; its full sequence is Fibrillin-2 (2912 aa).

The N-terminal stretch at 1-28 (MGRRRRLCLQLYFLWLGCVVLWAQGTAG) is a signal peptide. The disordered stretch occupies residues 27–52 (AGQPQPPPPKPPRPQPPPQQVRSATA). Positions 29 to 77 (QPQPPPPKPPRPQPPPQQVRSATAGSEGGFLAPEYREEGAAVASRVRRR) are excised as a propeptide. The span at 30–45 (PQPPPPKPPRPQPPPQ) shows a compositional bias: pro residues. 3 EGF-like domains span residues 111-142 (IVPICRNSCGDGFCSRPNMCTCSSGQISSTCG), 145-176 (SIQQCSVRCMNGGTCADDHCQCQKGYIGTYCG), and 176-208 (GQPVCENGCQNGGRCIGPNRCACVYGFTGPQCE). 9 disulfides stabilise this stretch: cysteine 115-cysteine 124, cysteine 119-cysteine 130, cysteine 132-cysteine 141, cysteine 149-cysteine 159, cysteine 153-cysteine 164, cysteine 166-cysteine 175, cysteine 180-cysteine 190, cysteine 184-cysteine 196, and cysteine 198-cysteine 207. Residues 149 to 359 (CSVRCMNGGT…VTSTDGSRCI (211 aa)) are interaction with MFAP4. The TB 1 domain occupies 214–266 (GPCFTQVNNQMCQGQLTGIVCTKTLCCATIGRAWGHPCEMCPAQPQPCRRGFI). Positions 276-317 (DVDECQAIPGICQGGNCINTVGSFECRCPAGHKQSETTQKCE) constitute an EGF-like 4; calcium-binding domain. Cystine bridges form between cysteine 280–cysteine 292, cysteine 287–cysteine 301, cysteine 303–cysteine 316, cysteine 322–cysteine 334, cysteine 329–cysteine 343, and cysteine 345–cysteine 358. Serine 298 is a glycosylation site (O-linked (Glc) serine). The EGF-like 5; calcium-binding domain occupies 318–359 (DIDECSIIPGICETGECSNTVGSYFCVCPRGYVTSTDGSRCI). A glycan (O-linked (Glc) serine) is linked at serine 340. The TB 2 domain occupies 364-417 (GMCFSGLVNGRCAQELPGRMTKMQCCCEPGRCWGIGTIPEACPVRGSEEYRRLC). An N-linked (GlcNAc...) asparagine glycan is attached at asparagine 492. Residues 494–534 (TIDICKHHANLCLNGRCIPTVSSYRCECNMGYKQDANGDCI) enclose the EGF-like 6 domain. Cystine bridges form between cysteine 498/cysteine 510, cysteine 505/cysteine 519, cysteine 521/cysteine 533, cysteine 539/cysteine 549, cysteine 544/cysteine 558, cysteine 560/cysteine 573, cysteine 579/cysteine 591, cysteine 586/cysteine 600, cysteine 602/cysteine 615, cysteine 621/cysteine 632, cysteine 627/cysteine 641, cysteine 643/cysteine 656, cysteine 662/cysteine 673, cysteine 668/cysteine 682, and cysteine 684/cysteine 697. A glycan (O-linked (Glc) serine) is linked at serine 516. Positions 535-574 (DVDECTSNPCTNGDCVNTPGSYYCKCHAGFQRTPTKQACI) constitute an EGF-like 7; calcium-binding domain. The O-linked (Glc) serine glycan is linked to serine 555. The EGF-like 8; calcium-binding domain maps to 575 to 616 (DIDECIQNGVLCKNGRCVNTDGSFQCICNAGFELTTDGKNCV). Serine 597 is a glycosylation site (O-linked (Glc) serine). Positions 617–657 (DHDECTTTNMCLNGMCINEDGSFKCICKPGFVLAPNGRYCT) constitute an EGF-like 9; calcium-binding domain. A glycan (O-linked (Glc) serine) is linked at serine 638. Positions 658–698 (DVDECQTPGICMNGHCINSEGSFRCDCPPGLAVGMDGRVCV) constitute an EGF-like 10; calcium-binding domain. The O-linked (Glc) serine glycan is linked to serine 679. In terms of domain architecture, TB 3 spans 704–756 (STCYGGIKKGVCVRPFPGAVTKSECCCANPDYGFGEPCQPCPAKNSAEFHGLC). Residues 768–809 (DINECALDPDICANGICENLRGSYRCNCNSGYEPDASGRNCI) form the EGF-like 11; calcium-binding domain. Disulfide bonds link cysteine 772-cysteine 784, cysteine 779-cysteine 793, cysteine 795-cysteine 808, cysteine 814-cysteine 826, cysteine 821-cysteine 835, cysteine 837-cysteine 850, cysteine 856-cysteine 866, cysteine 861-cysteine 875, and cysteine 877-cysteine 890. Residues 810 to 851 (DIDECLVNRLLCDNGLCRNTPGSYSCTCPPGYVFRTETETCE) enclose the EGF-like 12; calcium-binding domain. Residue serine 832 is glycosylated (O-linked (Glc) serine). Residues 852–891 (DINECESNPCVNGACRNNLGSFNCECSPGSKLSSTGLICI) form the EGF-like 13; calcium-binding domain. The O-linked (Glc) serine glycan is linked to serine 872. The TB 4 domain maps to 896-947 (GTCWLNIQDSRCEVNINGATLKSECCATLGAAWGSPCERCELDTACPRGLAR). Positions 955–996 (DVNECEVFPGVCPNGRCVNSKGSFHCECPEGLTLDGTGRVCL) constitute an EGF-like 14; calcium-binding domain. Disulfide bonds link cysteine 959–cysteine 971, cysteine 966–cysteine 980, and cysteine 982–cysteine 995. Serine 977 carries an O-linked (Glc) serine glycan. The TB 5 domain occupies 1001-1052 (EQCYLKWDEDECIHPVPGKFRMDACCCAVGAAWGTECEECPKPGTKEYETLC). An EGF-like 15; calcium-binding domain is found at 1073–1114 (DINECKAFPGMCTYGKCRNTIGSFKCRCNSGFALDMEERNCT). 36 disulfide bridges follow: cysteine 1077/cysteine 1089, cysteine 1084/cysteine 1098, cysteine 1100/cysteine 1113, cysteine 1119/cysteine 1131, cysteine 1126/cysteine 1140, cysteine 1142/cysteine 1156, cysteine 1162/cysteine 1174, cysteine 1169/cysteine 1183, cysteine 1185/cysteine 1198, cysteine 1204/cysteine 1216, cysteine 1211/cysteine 1225, cysteine 1227/cysteine 1240, cysteine 1246/cysteine 1257, cysteine 1253/cysteine 1266, cysteine 1268/cysteine 1281, cysteine 1287/cysteine 1299, cysteine 1294/cysteine 1308, cysteine 1310/cysteine 1323, cysteine 1329/cysteine 1341, cysteine 1336/cysteine 1350, cysteine 1352/cysteine 1365, cysteine 1371/cysteine 1384, cysteine 1378/cysteine 1393, cysteine 1395/cysteine 1406, cysteine 1412/cysteine 1425, cysteine 1419/cysteine 1434, cysteine 1436/cysteine 1447, cysteine 1453/cysteine 1465, cysteine 1460/cysteine 1474, cysteine 1476/cysteine 1489, cysteine 1495/cysteine 1506, cysteine 1501/cysteine 1515, cysteine 1517/cysteine 1530, cysteine 1536/cysteine 1547, cysteine 1542/cysteine 1556, and cysteine 1558/cysteine 1571. Serine 1095 carries an O-linked (Glc) serine glycan. An N-linked (GlcNAc...) asparagine glycan is attached at asparagine 1112. An EGF-like 16; calcium-binding domain is found at 1115–1157 (DIDECRISPDLCGSGICVNTPGSFECECFEGYESGFMMMKNCM). The EGF-like 17; calcium-binding domain occupies 1158-1199 (DIDECERNPLLCRGGTCVNTEGSFQCDCPLGHELSPSREDCV). O-linked (Glc) serine glycosylation occurs at serine 1180. Residues 1200–1241 (DINECSLSDNLCRNGKCVNMIGTYQCSCNPGYQATPDRQGCT) enclose the EGF-like 18; calcium-binding domain. O-linked (Glc) threonine glycosylation is present at threonine 1222. Positions 1242-1282 (DIDECMIMNGGCDTQCTNSEGSYECSCSEGYALMPDGRSCA) constitute an EGF-like 19; calcium-binding domain. Residue serine 1263 is glycosylated (O-linked (Glc) serine). Positions 1283-1324 (DIDECENNPDICDGGQCTNIPGEYRCLCYDGFMASMDMKTCI) constitute an EGF-like 20; calcium-binding domain. Residues 1325-1366 (DVNECDLNSNICMFGECENTKGSFICHCQLGYSVKKGTTGCT) enclose the EGF-like 21; calcium-binding domain. An O-linked (Glc) serine glycan is attached at serine 1347. Residues 1367–1407 (DVDECEIGAHNCDMHASCLNIPGSFKCSCREGWIGNGIKCI) form the EGF-like 22; calcium-binding domain. Serine 1390 carries an O-linked (Glc) serine glycan. In terms of domain architecture, EGF-like 23; calcium-binding spans 1408–1448 (DLDECSNGTHQCSINAQCVNTPGSYRCACSEGFTGDGFTCS). An N-linked (GlcNAc...) asparagine glycan is attached at asparagine 1414. The 42-residue stretch at 1449–1490 (DVDECAENINLCENGQCLNVPGAYRCECEMGFTPASDSRSCQ) folds into the EGF-like 24; calcium-binding domain. The EGF-like 25; calcium-binding domain occupies 1491–1531 (DIDECSFQNICVFGTCNNLPGMFHCICDDGYELDRTGGNCT). The N-linked (GlcNAc...) asparagine glycan is linked to asparagine 1529. Residues 1532 to 1572 (DIDECADPINCVNGLCVNTPGRYECNCPPDFQLNPTGVGCV) enclose the EGF-like 26; calcium-binding domain. A TB 6 domain is found at 1577–1633 (GNCYLKFGPRGDGSLSCNTEIGVGVSRSSCCCSLGKAWGNPCETCPPVNSTEYYTLC). Residue asparagine 1625 is glycosylated (N-linked (GlcNAc...) asparagine). An EGF-like 27; calcium-binding domain is found at 1650–1691 (DIDECQELPGLCQGGNCINTFGSFQCECPQGYYLSEDTRICE). Intrachain disulfides connect cysteine 1654-cysteine 1666, cysteine 1661-cysteine 1675, cysteine 1677-cysteine 1690, cysteine 1696-cysteine 1708, cysteine 1703-cysteine 1717, and cysteine 1719-cysteine 1732. Serine 1672 is a glycosylation site (O-linked (Glc) serine). One can recognise an EGF-like 28; calcium-binding domain in the interval 1692–1733 (DIDECFAHPGVCGPGTCYNTLGNYTCICPPEYMQVNGGHNCM). The N-linked (GlcNAc...) asparagine glycan is linked to asparagine 1714. Residues 1735–2171 (MRKSFCYRSY…VPSLHDTRED (437 aa)) are interaction with MFAP4. Residues 1738-1791 (SFCYRSYNGTTCENELPFNVTKRMCCCTYNVGKAWNKPCEPCPTPGTADFKTIC) form the TB 7 domain. Asparagine 1745 and asparagine 1756 each carry an N-linked (GlcNAc...) asparagine glycan. In terms of domain architecture, EGF-like 29; calcium-binding spans 1808 to 1849 (DIDECKEIPGICANGVCINQIGSFRCECPTGFSYNDLLLVCE). Intrachain disulfides connect cysteine 1812-cysteine 1824, cysteine 1819-cysteine 1833, cysteine 1835-cysteine 1848, cysteine 1854-cysteine 1867, cysteine 1861-cysteine 1876, cysteine 1878-cysteine 1890, cysteine 1896-cysteine 1908, cysteine 1903-cysteine 1917, cysteine 1919-cysteine 1932, cysteine 1938-cysteine 1948, cysteine 1943-cysteine 1957, cysteine 1959-cysteine 1971, cysteine 1977-cysteine 1990, cysteine 1985-cysteine 1999, cysteine 2001-cysteine 2014, cysteine 2020-cysteine 2032, cysteine 2027-cysteine 2041, cysteine 2043-cysteine 2054, cysteine 2060-cysteine 2072, cysteine 2067-cysteine 2081, and cysteine 2083-cysteine 2096. The region spanning 1850-1891 (DIDECSNGDNLCQRNADCINSPGSYRCECAAGFKLSPNGACV) is the EGF-like 30; calcium-binding domain. A glycan (O-linked (Glc) serine) is linked at serine 1873. One can recognise an EGF-like 31; calcium-binding domain in the interval 1892–1933 (DRNECLEIPNVCSHGLCVDLQGSYQCICHNGFKASQDQTMCM). The region spanning 1934–1972 (DVDECERHPCGNGTCKNTVGSYNCLCYPGFELTHNNDCL) is the EGF-like 32; calcium-binding domain. N-linked (GlcNAc...) asparagine glycosylation is present at asparagine 1945. An O-linked (Glc) serine glycan is attached at serine 1954. The 43-residue stretch at 1973 to 2015 (DIDECSSFFGQVCRNGRCFNEIGSFKCLCNEGYELTPDGKNCI) folds into the EGF-like 33; calcium-binding domain. The O-linked (Glc) serine glycan is linked to serine 1996. The EGF-like 34; calcium-binding domain maps to 2016 to 2055 (DTNECVALPGSCSPGTCQNLEGSFRCICPPGYEVKSENCI). The region spanning 2056-2097 (DINECDEDPNICLFGSCTNTPGGFQCLCPPGFVLSDNGRRCF) is the EGF-like 35; calcium-binding domain. Residues 2102-2155 (SFCFTNFENGKCSVPKAFNTTKAKCCCSKMPGEGWGDPCELCPKDDEVAFQDLC) form the TB 8 domain. The N-linked (GlcNAc...) asparagine glycan is linked to asparagine 2120. The region spanning 2171–2212 (DVNECLESPGICSNGQCINTDGSFRCECPMGYNLDYTGVRCV) is the EGF-like 36; calcium-binding domain. Cystine bridges form between cysteine 2175–cysteine 2187, cysteine 2182–cysteine 2196, cysteine 2198–cysteine 2211, cysteine 2217–cysteine 2228, cysteine 2223–cysteine 2237, cysteine 2239–cysteine 2251, cysteine 2257–cysteine 2268, cysteine 2264–cysteine 2277, cysteine 2279–cysteine 2292, cysteine 2298–cysteine 2312, cysteine 2305–cysteine 2321, cysteine 2323–cysteine 2336, cysteine 2342–cysteine 2354, cysteine 2349–cysteine 2363, and cysteine 2365–cysteine 2378. O-linked (Glc) serine glycosylation is present at serine 2193. The region spanning 2213–2252 (DTDECSIGNPCGNGTCTNVIGSFECNCNEGFEPGPMMNCE) is the EGF-like 37; calcium-binding domain. N-linked (GlcNAc...) asparagine glycosylation occurs at asparagine 2225. Residues 2253–2293 (DINECAQNPLLCAFRCMNTFGSYECTCPIGYALREDQKMCK) enclose the EGF-like 38; calcium-binding domain. O-linked (Glc) serine glycosylation is present at serine 2274. The EGF-like 39; calcium-binding domain maps to 2294–2337 (DLDECAEGLHDCESRGMMCKNLIGTFMCICPPGMARRPDGEGCV). In terms of domain architecture, EGF-like 40; calcium-binding spans 2338–2379 (DENECRTKPGICENGRCVNIIGSYRCECNEGFQSSSSGTECL). A glycan (O-linked (Glc) serine) is linked at serine 2360. The region spanning 2384–2437 (GLCFAEVLQTICQMASSSRNLVTKSECCCDGGRGWGHQCELCPLPGTAQYKKIC) is the TB 9 domain. Residues 2449-2490 (DIDECKVMPNLCTNGQCINTMGSFRCFCKVGYTTDISGTSCI) enclose the EGF-like 41; calcium-binding domain. 21 cysteine pairs are disulfide-bonded: cysteine 2453/cysteine 2465, cysteine 2460/cysteine 2474, cysteine 2476/cysteine 2489, cysteine 2495/cysteine 2506, cysteine 2502/cysteine 2515, cysteine 2517/cysteine 2530, cysteine 2536/cysteine 2547, cysteine 2543/cysteine 2556, cysteine 2558/cysteine 2569, cysteine 2575/cysteine 2588, cysteine 2582/cysteine 2597, cysteine 2599/cysteine 2612, cysteine 2618/cysteine 2628, cysteine 2624/cysteine 2637, cysteine 2639/cysteine 2652, cysteine 2658/cysteine 2669, cysteine 2664/cysteine 2678, cysteine 2680/cysteine 2693, cysteine 2699/cysteine 2710, cysteine 2706/cysteine 2719, and cysteine 2721/cysteine 2733. Residue serine 2471 is glycosylated (O-linked (Glc) serine). Residues 2491–2531 (DLDECSQSPKPCNYICKNTEGSYQCSCPRGYVLQEDGKTCK) form the EGF-like 42; calcium-binding domain. Serine 2512 carries an O-linked (Glc) serine glycan. The EGF-like 43; calcium-binding domain maps to 2532–2570 (DLDECQTKQHNCQFLCVNTLGGFTCKCPPGFTQHHTACI). An EGF-like 44; calcium-binding domain is found at 2571–2613 (DNNECGSQPSLCGAKGICQNTPGSFSCECQRGFSLDATGLNCE). An O-linked (Glc) serine glycan is attached at serine 2594. Residues 2614-2653 (DVDECDGNHRCQHGCQNILGGYRCGCPQGYIQHYQWNQCV) form the EGF-like 45; calcium-binding domain. The EGF-like 46; calcium-binding domain maps to 2654–2694 (DENECSNPNACGSASCYNTLGSYKCACPSGFSFDQFSSACH). Serine 2675 carries O-linked (Glc) serine glycosylation. Positions 2695-2734 (DVNECSSSKNPCNYGCSNTEGGYLCGCPPGYYRVGQGHCV) constitute an EGF-like 47; calcium-binding domain. Asparagine 2808 carries an N-linked (GlcNAc...) asparagine glycan.

This sequence belongs to the fibrillin family. As to quaternary structure, interacts with BMP2, BMP4, BMP7, BMP10 and GDF5. Interacts with MFAP2 and MFAP5. Interacts with ADAMTSL5. Interacts with MFAP4. In terms of processing, N-glycosylated. Post-translationally, O-glycosylated on serine residues by POGLUT2 and POGLUT3. As to expression, almost exclusively expressed in placenta. Expressed at much lower level in other tissues. Expressed in fetal eye (18 weeks)in the retinal pigment epithelium (RPE), the choroid, Bruch's membrane and in the sclera. Not expressed in the neural retina. Present at high level in cytotrophoblasts as compared with syncytiotrophoblasts at 8-9 weeks of pregnancy (at protein level). Levels in the serum increase during pregnancy (at protein level).

The protein resides in the secreted. It localises to the extracellular space. Its subcellular location is the extracellular matrix. Its function is as follows. Fibrillins are structural components of 10-12 nm extracellular calcium-binding microfibrils, which occur either in association with elastin or in elastin-free bundles. Fibrillin-2-containing microfibrils regulate the early process of elastic fiber assembly. Regulates osteoblast maturation by controlling TGF-beta bioavailability and calibrating TGF-beta and BMP levels, respectively. In terms of biological role, hormone secreted by trophoblasts that promotes trophoblast invasiveness. Has glucogenic activity: is able to increase plasma glucose levels. This Homo sapiens (Human) protein is Fibrillin-2.